The following is a 446-amino-acid chain: Kynurenine 3-monooxygenase (446 aa).

This sequence belongs to the aromatic-ring hydroxylase family. KMO subfamily. The cofactor is FAD.

The catalysed reaction is L-kynurenine + NADPH + O2 + H(+) = 3-hydroxy-L-kynurenine + NADP(+) + H2O. The protein operates within cofactor biosynthesis; NAD(+) biosynthesis; quinolinate from L-kynurenine: step 1/3. In terms of biological role, catalyzes the hydroxylation of L-kynurenine (L-Kyn) to form 3-hydroxy-L-kynurenine (L-3OHKyn). Required for synthesis of quinolinic acid. This chain is Kynurenine 3-monooxygenase, found in Flavobacterium johnsoniae (strain ATCC 17061 / DSM 2064 / JCM 8514 / BCRC 14874 / CCUG 350202 / NBRC 14942 / NCIMB 11054 / UW101) (Cytophaga johnsonae).